The sequence spans 241 residues: Phycocyanobilin:ferredoxin oxidoreductase (241 aa).

Belongs to the HY2 family.

The enzyme catalyses (2R,3Z)-phycocyanobilin + 4 oxidized [2Fe-2S]-[ferredoxin] = biliverdin IXalpha + 4 reduced [2Fe-2S]-[ferredoxin] + 4 H(+). Catalyzes the four-electron reduction of biliverdin IX-alpha (2-electron reduction at both the A and D rings); the reaction proceeds via an isolatable 2-electron intermediate, 181,182-dihydrobiliverdin. The protein is Phycocyanobilin:ferredoxin oxidoreductase of Prochlorococcus marinus (strain MIT 9215).